Reading from the N-terminus, the 231-residue chain is 6-hydroxymethyl-7,8-dihydropterin pyrophosphokinase (231 aa).

Belongs to the archaeal 6-HMPDK family. Requires Mg(2+) as cofactor.

The catalysed reaction is 6-hydroxymethyl-7,8-dihydropterin + ATP = (7,8-dihydropterin-6-yl)methyl diphosphate + AMP + H(+). Its function is as follows. Catalyzes the transfer of diphosphate from ATP to 6-hydroxymethyl-7,8-dihydropterin (6-HMD), leading to 6-hydroxymethyl-7,8-dihydropterin diphosphate (6-HMDP). To a lesser extent, can also use CTP, UTP, and GTP as the nucleotide triphosphate substrate. The chain is 6-hydroxymethyl-7,8-dihydropterin pyrophosphokinase from Pyrococcus furiosus (strain ATCC 43587 / DSM 3638 / JCM 8422 / Vc1).